The chain runs to 388 residues: Formate-dependent phosphoribosylglycinamide formyltransferase (388 aa).

N(1)-(5-phospho-beta-D-ribosyl)glycinamide-binding positions include 20-21 and glutamate 80; that span reads EL. Residues arginine 112, lysine 153, 158–163, 193–196, and glutamate 201 contribute to the ATP site; these read SSGKGQ and EEFI. One can recognise an ATP-grasp domain in the interval 117-306; it reads RLAFEKLGLR…EFEIHARAIL (190 aa). Mg(2+)-binding residues include glutamate 265 and glutamate 277. N(1)-(5-phospho-beta-D-ribosyl)glycinamide is bound by residues aspartate 284, lysine 352, and 359-360; that span reads RR.

Belongs to the PurK/PurT family. As to quaternary structure, homodimer.

The enzyme catalyses N(1)-(5-phospho-beta-D-ribosyl)glycinamide + formate + ATP = N(2)-formyl-N(1)-(5-phospho-beta-D-ribosyl)glycinamide + ADP + phosphate + H(+). Its pathway is purine metabolism; IMP biosynthesis via de novo pathway; N(2)-formyl-N(1)-(5-phospho-D-ribosyl)glycinamide from N(1)-(5-phospho-D-ribosyl)glycinamide (formate route): step 1/1. Involved in the de novo purine biosynthesis. Catalyzes the transfer of formate to 5-phospho-ribosyl-glycinamide (GAR), producing 5-phospho-ribosyl-N-formylglycinamide (FGAR). Formate is provided by PurU via hydrolysis of 10-formyl-tetrahydrofolate. The sequence is that of Formate-dependent phosphoribosylglycinamide formyltransferase from Methanococcus maripaludis (strain C7 / ATCC BAA-1331).